We begin with the raw amino-acid sequence, 501 residues long: Probable cytosol aminopeptidase (501 aa).

Positions 272 and 277 each coordinate Mn(2+). The active site involves Lys-284. Mn(2+) is bound by residues Asp-295, Asp-354, and Glu-356. Residue Arg-358 is part of the active site.

The protein belongs to the peptidase M17 family. Mn(2+) serves as cofactor.

Its subcellular location is the cytoplasm. It catalyses the reaction Release of an N-terminal amino acid, Xaa-|-Yaa-, in which Xaa is preferably Leu, but may be other amino acids including Pro although not Arg or Lys, and Yaa may be Pro. Amino acid amides and methyl esters are also readily hydrolyzed, but rates on arylamides are exceedingly low.. The catalysed reaction is Release of an N-terminal amino acid, preferentially leucine, but not glutamic or aspartic acids.. Its function is as follows. Presumably involved in the processing and regular turnover of intracellular proteins. Catalyzes the removal of unsubstituted N-terminal amino acids from various peptides. In Buchnera aphidicola subsp. Baizongia pistaciae (strain Bp), this protein is Probable cytosol aminopeptidase.